The chain runs to 267 residues: Cytochrome b (267 aa).

4 helical membrane passes run 4 to 24, 48 to 69, 84 to 104, and 149 to 169; these read FGSLLGICLMTQILTGLLLAA, WLIRNLHANGASFFFICIYLHI, WNTGVILLLTLMATAFVGYVL, and FFTLHFLLPFMIAGLTIIHLT. The heme b site is built by histidine 54 and histidine 68. Heme b is bound by residues histidine 153 and histidine 167. Position 172 (histidine 172) interacts with a ubiquinone. 2 helical membrane-spanning segments follow: residues 197–217 and 259–267; these read LKDILGFTLMFLPLMTLALFA and LGGVLALAA.

This sequence belongs to the cytochrome b family. As to quaternary structure, the cytochrome bc1 complex contains 11 subunits: 3 respiratory subunits (MT-CYB, CYC1 and UQCRFS1), 2 core proteins (UQCRC1 and UQCRC2) and 6 low-molecular weight proteins (UQCRH/QCR6, UQCRB/QCR7, UQCRQ/QCR8, UQCR10/QCR9, UQCR11/QCR10 and a cleavage product of UQCRFS1). This cytochrome bc1 complex then forms a dimer. Heme b is required as a cofactor.

Its subcellular location is the mitochondrion inner membrane. Functionally, component of the ubiquinol-cytochrome c reductase complex (complex III or cytochrome b-c1 complex) that is part of the mitochondrial respiratory chain. The b-c1 complex mediates electron transfer from ubiquinol to cytochrome c. Contributes to the generation of a proton gradient across the mitochondrial membrane that is then used for ATP synthesis. This chain is Cytochrome b (MT-CYB), found in Raphus cucullatus (Dodo).